Consider the following 330-residue polypeptide: DNA-directed RNA polymerase subunit alpha (330 aa).

An alpha N-terminal domain (alpha-NTD) region spans residues 1 to 229 (MKNIKFIKPF…DHFNVLVELS (229 aa)). Residues 245–330 (AHNSVLDLEI…HSVEEDKDKH (86 aa)) form an alpha C-terminal domain (alpha-CTD) region.

This sequence belongs to the RNA polymerase alpha chain family. Homodimer. The RNAP catalytic core consists of 2 alpha, 1 beta, 1 beta' and 1 omega subunit. When a sigma factor is associated with the core the holoenzyme is formed, which can initiate transcription.

The enzyme catalyses RNA(n) + a ribonucleoside 5'-triphosphate = RNA(n+1) + diphosphate. DNA-dependent RNA polymerase catalyzes the transcription of DNA into RNA using the four ribonucleoside triphosphates as substrates. This chain is DNA-directed RNA polymerase subunit alpha, found in Onion yellows phytoplasma (strain OY-M).